We begin with the raw amino-acid sequence, 471 residues long: Ribulose bisphosphate carboxylase large chain (471 aa).

An N6,N6,N6-trimethyllysine modification is found at Lys5. Substrate contacts are provided by Asn114 and Thr164. The active-site Proton acceptor is the Lys166. Lys168 serves as a coordination point for substrate. Mg(2+) contacts are provided by Lys192, Asp194, and Glu195. Lys192 is subject to N6-carboxylysine. His285 functions as the Proton acceptor in the catalytic mechanism. Positions 286, 318, and 370 each coordinate substrate.

It belongs to the RuBisCO large chain family. Type I subfamily. Heterohexadecamer of 8 large chains and 8 small chains; disulfide-linked. The disulfide link is formed within the large subunit homodimers. Requires Mg(2+) as cofactor. In terms of processing, the disulfide bond which can form in the large chain dimeric partners within the hexadecamer appears to be associated with oxidative stress and protein turnover.

Its subcellular location is the plastid. It is found in the chloroplast. It carries out the reaction 2 (2R)-3-phosphoglycerate + 2 H(+) = D-ribulose 1,5-bisphosphate + CO2 + H2O. The enzyme catalyses D-ribulose 1,5-bisphosphate + O2 = 2-phosphoglycolate + (2R)-3-phosphoglycerate + 2 H(+). Functionally, ruBisCO catalyzes two reactions: the carboxylation of D-ribulose 1,5-bisphosphate, the primary event in carbon dioxide fixation, as well as the oxidative fragmentation of the pentose substrate in the photorespiration process. Both reactions occur simultaneously and in competition at the same active site. The chain is Ribulose bisphosphate carboxylase large chain from Deppea grandiflora.